Here is a 228-residue protein sequence, read N- to C-terminus: Cytidylate kinase (228 aa).

17–25 (GPTASGKGT) contacts ATP.

Belongs to the cytidylate kinase family. Type 1 subfamily.

The protein resides in the cytoplasm. It catalyses the reaction CMP + ATP = CDP + ADP. The enzyme catalyses dCMP + ATP = dCDP + ADP. In Burkholderia vietnamiensis (strain G4 / LMG 22486) (Burkholderia cepacia (strain R1808)), this protein is Cytidylate kinase.